A 362-amino-acid polypeptide reads, in one-letter code: Porin Omp2b (362 aa).

Residues 1 to 22 (MNIKSLLLGSAAALVAASGAQA) form the signal peptide.

It belongs to the alphaproteobacteria porin family. Homotrimer.

The protein localises to the cell outer membrane. Forms passive diffusion pores that allow small molecular weight hydrophilic materials across the outer membrane. The sequence is that of Porin Omp2b (omp2b) from Brucella suis biovar 1 (strain 1330).